Here is a 320-residue protein sequence, read N- to C-terminus: MIKKIGVLTSGGDAPGMNAAIRGVVRAALTEGLEVMGIYDGYLGLYEDRMVQLDRYSVSDMINRGGTFLGSARFPEFRDENVRAVAIENLKKRGIDALVVIGGDGSYMGAKRLTEMGFPCIGLPGTIDNDIKGTDYTIGYFTALGTVVEAIDRLRDTSSSHQRISIVEVMGRYCGDLTLAAAIAGGCEFVVVPEVEFSRDDLVAEIKAGIAKGKKHAIVAITEHMCDVDELAHYIEKETGRETRATVLGHIQRGGSPVPYDRILASRMGSYAIELLLEGFGGRCVGIQNEQLVHHDIIDAIENMKRPFKGDWLDCAKKLY.

ATP is bound at residue Gly-12. Residues 22–26 and 55–60 each bind ADP; these read RGVVR and RYSVSD. ATP-binding positions include 73-74 and 103-106; these read RF and GDGS. Position 104 (Asp-104) interacts with Mg(2+). Residue 126-128 coordinates substrate; that stretch reads TID. Residue Asp-128 is the Proton acceptor of the active site. Arg-155 is an ADP binding site. Residues Arg-163 and 170 to 172 each bind substrate; that span reads MGR. ADP-binding positions include 186–188, Lys-212, and 214–216; these read GCE and KKH. Substrate is bound by residues Glu-223, Arg-244, and 250 to 253; that span reads HIQR.

Belongs to the phosphofructokinase type A (PFKA) family. ATP-dependent PFK group I subfamily. Prokaryotic clade 'B1' sub-subfamily. As to quaternary structure, homotetramer. Mg(2+) is required as a cofactor.

The protein localises to the cytoplasm. The enzyme catalyses beta-D-fructose 6-phosphate + ATP = beta-D-fructose 1,6-bisphosphate + ADP + H(+). It functions in the pathway carbohydrate degradation; glycolysis; D-glyceraldehyde 3-phosphate and glycerone phosphate from D-glucose: step 3/4. With respect to regulation, allosterically activated by ADP and other diphosphonucleosides, and allosterically inhibited by phosphoenolpyruvate. In terms of biological role, catalyzes the phosphorylation of D-fructose 6-phosphate to fructose 1,6-bisphosphate by ATP, the first committing step of glycolysis. In Citrobacter koseri (strain ATCC BAA-895 / CDC 4225-83 / SGSC4696), this protein is ATP-dependent 6-phosphofructokinase.